Reading from the N-terminus, the 337-residue chain is Alanine racemase (337 aa).

Residue Lys-33 is the Proton acceptor; specific for D-alanine of the active site. Residue Lys-33 is modified to N6-(pyridoxal phosphate)lysine. Residue Arg-118 coordinates substrate. Tyr-246 (proton acceptor; specific for L-alanine) is an active-site residue. Met-292 serves as a coordination point for substrate.

The protein belongs to the alanine racemase family. The cofactor is pyridoxal 5'-phosphate.

The enzyme catalyses L-alanine = D-alanine. It functions in the pathway amino-acid biosynthesis; D-alanine biosynthesis; D-alanine from L-alanine: step 1/1. Functionally, catalyzes the interconversion of L-alanine and D-alanine. May also act on other amino acids. The chain is Alanine racemase (alr) from Campylobacter curvus (strain 525.92).